Reading from the N-terminus, the 375-residue chain is Actin, cytoplasmic (375 aa).

Belongs to the actin family.

Its subcellular location is the cytoplasm. The protein resides in the cytoskeleton. The enzyme catalyses ATP + H2O = ADP + phosphate + H(+). Its function is as follows. Actins are highly conserved proteins that are involved in various types of cell motility and are ubiquitously expressed in all eukaryotic cells. This is Actin, cytoplasmic (MIC-ACT-1) from Sterkiella nova (Ciliate).